A 414-amino-acid chain; its full sequence is NADH kinase POS5, mitochondrial (414 aa).

It belongs to the NAD kinase family.

The protein localises to the mitochondrion matrix. The catalysed reaction is NADH + ATP = ADP + NADPH + H(+). Its function is as follows. Phosphorylates both NADH and NAD(+), with a twofold preference for NADH. Anti-oxidant factor and key source of the cellular reductant NADPH. The protein is NADH kinase POS5, mitochondrial (POS5) of Saccharomyces cerevisiae (strain ATCC 204508 / S288c) (Baker's yeast).